Consider the following 872-residue polypeptide: MNSFSNLPAENLTIAVNMTKTLPTAVMHGFNSTNDPPSMSITRLFPALLECFGIVLCGYIAGRANVITSTQAKGLGNFVSRFALPALLFKNMVVLNFSNVDWSFLYSILIAKASVFFIVCVLTLLVASPDSRFSKAGLFPIFATQSNDFALGYPIVEALYQTTYPEYLQYIYLVAPISLMMLNPIGFIFCEIQKWKDTQNASQNKIKIVGLGLLRVLQNPIVFMVFIGIAFNFILDRKVPVYVENFLDGLGNSFSGSALFYLGLTMVGKIKRLKKSAFVVLILLITAKLLVLPLLCREMVELLDKGDSVVNHTSLSNYAFLYGVFPVAPGVAIFATQFNMEVEIITSGMVISTFVSAPIMYVSAWLLTFPTMDPKPLAYAIQNVSFDISIVSLISLIWSQAILLLSKKYKQLPHMLTTNLLIAQSIVCAGMMIWNFVKEKNFVGQILVFVLLYSSLYSTYLWTGLLAISLFLLKKRERVQIPVGIIIISGWGIPALLVGVLLITGKHSGDSIDSAFFYGKEQMITTAVTLFCSILIAGISLMCMNRTAQAGSYEGFDQSQSHKVVEPGNTAFEEGPAPVNEPELFTSSIPETSCCSCSMGNGELHCPSIEPIANTSTSEPVIPSFEKNNHCVSRCNSQSCILAQEEEQYLQSGDQQLTRHVLLCLLLIIGLFANLSSCLWWLFNQEPGRLYVELQFFCAVFNFGQGFISFGIFGLDKHLIILPFKRRLEFLWNNKETAENRDSPVSEEIKMTCQQFIHYHRDLCIRNIVKERRCGAKTSAGTFCGCDLVNWLIEVGLASDRGEAVIYGDRLVQGGVIQHITNEYEFRDEYLFYRFLQKSPEQSPPVINANTLQQERYKEIEHSSPPSHSPKT.

Residues 1–40 lie on the Lumenal side of the membrane; it reads MNSFSNLPAENLTIAVNMTKTLPTAVMHGFNSTNDPPSMS. Positions 3 to 372 are PIN-like transporter; sequence SFSNLPAENL…SAWLLTFPTM (370 aa). Asparagine 11, asparagine 17, and asparagine 31 each carry an N-linked (GlcNAc...) asparagine glycan. Residues 41 to 61 traverse the membrane as a helical segment; it reads ITRLFPALLECFGIVLCGYIA. Cholesterol contacts are provided by phenylalanine 45 and tyrosine 59. The Cytoplasmic segment spans residues 62 to 81; sequence GRANVITSTQAKGLGNFVSR. Residues 82 to 102 traverse the membrane as a helical segment; it reads FALPALLFKNMVVLNFSNVDW. Topologically, residues 103–106 are lumenal; sequence SFLY. Residues 107–127 form a helical membrane-spanning segment; it reads SILIAKASVFFIVCVLTLLVA. The Cytoplasmic segment spans residues 128 to 135; sequence SPDSRFSK. The discontinuously helical transmembrane segment at 136 to 156 threads the bilayer; it reads AGLFPIFATQSNDFALGYPIV. Topologically, residues 157–169 are lumenal; that stretch reads EALYQTTYPEYLQ. The helical transmembrane segment at 170–190 threads the bilayer; that stretch reads YIYLVAPISLMMLNPIGFIFC. The Cytoplasmic segment spans residues 191–215; the sequence is EIQKWKDTQNASQNKIKIVGLGLLR. A discontinuously helical membrane pass occupies residues 216–236; it reads VLQNPIVFMVFIGIAFNFILD. At 237–245 the chain is on the lumenal side; that stretch reads RKVPVYVEN. A discontinuously helical membrane pass occupies residues 246–266; it reads FLDGLGNSFSGSALFYLGLTM. At 267-275 the chain is on the cytoplasmic side; sequence VGKIKRLKK. 3 residues coordinate cholesterol: glycine 268, lysine 269, and isoleucine 270. A helical membrane pass occupies residues 276–296; the sequence is SAFVVLILLITAKLLVLPLLC. The Lumenal portion of the chain corresponds to 297-317; sequence REMVELLDKGDSVVNHTSLSN. The N-linked (GlcNAc...) asparagine glycan is linked to asparagine 311. A discontinuously helical membrane pass occupies residues 318–338; the sequence is YAFLYGVFPVAPGVAIFATQF. Topologically, residues 339–348 are cytoplasmic; it reads NMEVEIITSG. The chain crosses the membrane as a helical span at residues 349-369; the sequence is MVISTFVSAPIMYVSAWLLTF. At 370–383 the chain is on the lumenal side; it reads PTMDPKPLAYAIQN. The GPCR stretch occupies residues 382–719; that stretch reads QNVSFDISIV…FGIFGLDKHL (338 aa). A glycan (N-linked (GlcNAc...) asparagine) is linked at asparagine 383. A helical transmembrane segment spans residues 384 to 404; the sequence is VSFDISIVSLISLIWSQAILL. The Cytoplasmic portion of the chain corresponds to 405–416; it reads LSKKYKQLPHML. A helical membrane pass occupies residues 417–437; the sequence is TTNLLIAQSIVCAGMMIWNFV. The Lumenal portion of the chain corresponds to 438 to 440; that stretch reads KEK. The helical transmembrane segment at 441-461 threads the bilayer; it reads NFVGQILVFVLLYSSLYSTYL. The Cytoplasmic segment spans residues 462–482; sequence WTGLLAISLFLLKKRERVQIP. Residues 483-503 form a helical membrane-spanning segment; it reads VGIIIISGWGIPALLVGVLLI. At 504–522 the chain is on the lumenal side; the sequence is TGKHSGDSIDSAFFYGKEQ. Residues 523–543 form a helical membrane-spanning segment; sequence MITTAVTLFCSILIAGISLMC. Topologically, residues 544–662 are cytoplasmic; that stretch reads MNRTAQAGSY…GDQQLTRHVL (119 aa). Arginine 659 is a cholesterol binding site. A helical membrane pass occupies residues 663 to 683; that stretch reads LCLLLIIGLFANLSSCLWWLF. Residues 684-693 lie on the Lumenal side of the membrane; the sequence is NQEPGRLYVE. The chain crosses the membrane as a helical span at residues 694–714; it reads LQFFCAVFNFGQGFISFGIFG. The Cytoplasmic portion of the chain corresponds to 715–872; that stretch reads LDKHLIILPF…SSPPSHSPKT (158 aa). Residues 759–837 form the DEP domain; it reads YHRDLCIRNI…DEYLFYRFLQ (79 aa).

As to quaternary structure, homodimer; via the transporter region and DEP domain. Interacts with the GATOR1 complex; preventing interaction between GATOR1 and KICSTOR; interaction is disrupted upon cholesterol starvation.

It localises to the lysosome membrane. In terms of biological role, cholesterol-binding protein that acts as a regulator of mTORC1 signaling pathway. Acts as a sensor of cholesterol to signal cholesterol sufficiency to mTORC1: in presence of cholesterol, binds cholesterol, leading to disruption of the interaction between the GATOR1 and KICSTOR complexes and promotion of mTORC1 signaling. Upon cholesterol starvation, GPR155/LYCHOS is unable to perturb the association between GATOR1 and KICSTOR, leading to mTORC1 signaling inhibition. Binds indole-3-acetic acid and may play a role in tryptophan metabolism. In Pongo abelii (Sumatran orangutan), this protein is Lysosomal cholesterol signaling protein (GPR155).